A 189-amino-acid polypeptide reads, in one-letter code: Elongation factor P (189 aa).

K34 carries the N6-(3,6-diaminohexanoyl)-5-hydroxylysine modification.

It belongs to the elongation factor P family. May be beta-lysylated on the epsilon-amino group of Lys-34 by the combined action of EpmA and EpmB, and then hydroxylated on the C5 position of the same residue by EpmC (if this protein is present). Lysylation is critical for the stimulatory effect of EF-P on peptide-bond formation. The lysylation moiety may extend toward the peptidyltransferase center and stabilize the terminal 3-CCA end of the tRNA. Hydroxylation of the C5 position on Lys-34 may allow additional potential stabilizing hydrogen-bond interactions with the P-tRNA.

The protein resides in the cytoplasm. It functions in the pathway protein biosynthesis; polypeptide chain elongation. Functionally, involved in peptide bond synthesis. Alleviates ribosome stalling that occurs when 3 or more consecutive Pro residues or the sequence PPG is present in a protein, possibly by augmenting the peptidyl transferase activity of the ribosome. Modification of Lys-34 is required for alleviation. The protein is Elongation factor P of Buchnera aphidicola subsp. Baizongia pistaciae (strain Bp).